Reading from the N-terminus, the 65-residue chain is Putative beta-neurotoxin RjAa4 (65 aa).

The 64-residue stretch at 1–64 folds into the LCN-type CS-alpha/beta domain; the sequence is KEGYPMGRDG…VWDSSTNKCG (64 aa). Disulfide bonds link cysteine 11-cysteine 63, cysteine 15-cysteine 37, cysteine 22-cysteine 44, and cysteine 26-cysteine 46.

It belongs to the long (4 C-C) scorpion toxin superfamily. Sodium channel inhibitor family. Beta subfamily. Expressed by the venom gland.

Its subcellular location is the secreted. In terms of biological role, beta toxins bind voltage-independently at site-4 of sodium channels (Nav) and shift the voltage of activation toward more negative potentials thereby affecting sodium channel activation and promoting spontaneous and repetitive firing. The polypeptide is Putative beta-neurotoxin RjAa4 (Rhopalurus junceus (Caribbean blue scorpion)).